Consider the following 1065-residue polypeptide: Ceruloplasmin (1065 aa).

The first 19 residues, 1–19 (MKILILGIFLFLCSTPAWA), serve as a signal peptide directing secretion. Plastocyanin-like domains are found at residues 20–200 (KEKH…LIIC) and 209–357 (KEKH…VQEC). Na(+) contacts are provided by tyrosine 55, glycine 64, and tyrosine 67. Cu(2+) contacts are provided by histidine 120 and histidine 122. Histidine 120 provides a ligand contact to O2. Lysine 128 provides a ligand contact to Ca(2+). Asparagine 138 carries an N-linked (GlcNAc...) (complex) asparagine glycan. Ca(2+) contacts are provided by glutamine 143, aspartate 146, and aspartate 147. Cysteine 174 and cysteine 200 are oxidised to a cystine. Cu(2+) contacts are provided by histidine 180 and histidine 182. An O2-binding site is contributed by histidine 180. Na(+) is bound at residue serine 256. A disulfide bridge links cysteine 276 with cysteine 357. Histidine 295, cysteine 338, and histidine 343 together coordinate Cu(2+). Residues asparagine 358 and asparagine 397 are each glycosylated (N-linked (GlcNAc...) (complex) asparagine). Plastocyanin-like domains lie at 370–560 (HVRH…MKIC) and 570–718 (RQKD…VNQC). Na(+)-binding residues include phenylalanine 408, glycine 417, and tyrosine 420. A disulfide bridge connects residues cysteine 534 and cysteine 560. The N-linked (GlcNAc...) asparagine glycan is linked to asparagine 588. Residue serine 617 coordinates Na(+). The cysteines at positions 637 and 718 are disulfide-linked. Residues histidine 656, cysteine 699, histidine 704, and methionine 709 each contribute to the Cu(2+) site. Cysteine 699 (nucleophile; for glutathione peroxidase activity) is an active-site residue. Serine 722 is subject to Phosphoserine; by FAM20C. Plastocyanin-like domains lie at 730 to 900 (GERT…LIVC) and 908 to 1061 (FNPR…QNED). Residue asparagine 762 is glycosylated (N-linked (GlcNAc...) (complex) asparagine). Residues phenylalanine 767, glycine 776, and tyrosine 779 each coordinate Na(+). Cysteines 874 and 900 form a disulfide. N-linked (GlcNAc...) asparagine glycosylation occurs at asparagine 926. Residue serine 955 participates in Na(+) binding. Histidine 994, histidine 997, histidine 999, histidine 1039, cysteine 1040, histidine 1041, histidine 1045, and methionine 1050 together coordinate Cu(2+). O2 contacts are provided by histidine 997 and histidine 999. An O2-binding site is contributed by histidine 1041.

Belongs to the multicopper oxidase family. Found in a complex with MPO and LTF; interacts directly with MPO and LTF, which allows Fe(3+) incorporation into LTF, activation of CP ferroxidase activity and protection of CP antioxidant properties by MPO. The cofactor is Cu(2+). In terms of tissue distribution, expressed by the liver and secreted in plasma.

The protein localises to the secreted. It carries out the reaction 4 Fe(2+) + O2 + 4 H(+) = 4 Fe(3+) + 2 H2O. The enzyme catalyses 4 Cu(+) + O2 + 4 H(+) = 4 Cu(2+) + 2 H2O. It catalyses the reaction a hydroperoxide + 2 glutathione = an alcohol + glutathione disulfide + H2O. The catalysed reaction is 4 nitric oxide + O2 + 2 H2O = 4 nitrite + 4 H(+). It carries out the reaction 2 glutathione + H2O2 = glutathione disulfide + 2 H2O. In terms of biological role, multifunctional blue, copper-binding (6-7 atoms per molecule) glycoprotein. It has ferroxidase activity oxidizing Fe(2+) to Fe(3+) without releasing radical oxygen species. It is involved in iron transport across the cell membrane. Copper ions provide a large number of enzymatic activites. Oxidizes highly toxic ferrous ions to the ferric state for further incorporation onto apo-transferrins, catalyzes Cu(+) oxidation and promotes the oxidation of biogenic amines such as norepinephrin and serotonin. Provides Cu(2+) ions for the ascorbate-mediated deaminase degradation of the heparan sulfate chains of GPC1. Has glutathione peroxidase-like activity, can remove both hydrogen peroxide and lipid hydroperoxide in the presence of thiols. Also shows NO-oxidase and NO2 synthase activities that determine endocrine NO homeostasis. The polypeptide is Ceruloplasmin (Homo sapiens (Human)).